The sequence spans 62 residues: UPF0434 protein RHE_CH03977 (62 aa).

This sequence belongs to the UPF0434 family.

The protein is UPF0434 protein RHE_CH03977 of Rhizobium etli (strain ATCC 51251 / DSM 11541 / JCM 21823 / NBRC 15573 / CFN 42).